Consider the following 570-residue polypeptide: Urease subunit alpha (570 aa).

The Urease domain occupies 131–570 (GGMDSHIHFI…LPMAQRYFLF (440 aa)). Residues H136, H138, and K219 each coordinate Ni(2+). K219 carries the N6-carboxylysine modification. H221 lines the substrate pocket. 2 residues coordinate Ni(2+): H248 and H274. H322 functions as the Proton donor in the catalytic mechanism. D362 contributes to the Ni(2+) binding site.

Belongs to the metallo-dependent hydrolases superfamily. Urease alpha subunit family. As to quaternary structure, heterotrimer of UreA (gamma), UreB (beta) and UreC (alpha) subunits. Three heterotrimers associate to form the active enzyme. The cofactor is Ni cation. In terms of processing, carboxylation allows a single lysine to coordinate two nickel ions.

The protein localises to the cytoplasm. The catalysed reaction is urea + 2 H2O + H(+) = hydrogencarbonate + 2 NH4(+). The protein operates within nitrogen metabolism; urea degradation; CO(2) and NH(3) from urea (urease route): step 1/1. The chain is Urease subunit alpha from Rhizobium meliloti (strain 1021) (Ensifer meliloti).